Consider the following 315-residue polypeptide: NADH-cytochrome b5 reductase-like (315 aa).

Residues 19–55 enclose the Oxidoreductase-like domain; the sequence is RPTEPLPSQCCGSGCSPCVFDLYHRDLARWEAAQASK. An FAD-binding FR-type domain is found at 75-177; the sequence is ETFVAFCIIA…RGPFGDFFYK (103 aa). Residues 157-172 and 182-214 contribute to the FAD site; these read ESWR…GPFG and GELL…TFVT.

Belongs to the flavoprotein pyridine nucleotide cytochrome reductase family. FAD serves as cofactor.

It carries out the reaction 2 Fe(III)-[cytochrome b5] + NADH = 2 Fe(II)-[cytochrome b5] + NAD(+) + H(+). Its function is as follows. NADH-cytochrome b5 reductases are involved in desaturation and elongation of fatty acids, cholesterol biosynthesis, drug metabolism, and, in erythrocyte, methemoglobin reduction. This Homo sapiens (Human) protein is NADH-cytochrome b5 reductase-like (CYB5RL).